Consider the following 418-residue polypeptide: Serine hydroxymethyltransferase (418 aa).

Residues leucine 121 and 125 to 127 each bind (6S)-5,6,7,8-tetrahydrofolate; that span reads GHL. Lysine 230 carries the N6-(pyridoxal phosphate)lysine modification. Residue 355–357 participates in (6S)-5,6,7,8-tetrahydrofolate binding; the sequence is SPF.

Belongs to the SHMT family. In terms of assembly, homodimer. It depends on pyridoxal 5'-phosphate as a cofactor.

It localises to the cytoplasm. The enzyme catalyses (6R)-5,10-methylene-5,6,7,8-tetrahydrofolate + glycine + H2O = (6S)-5,6,7,8-tetrahydrofolate + L-serine. The protein operates within one-carbon metabolism; tetrahydrofolate interconversion. Its pathway is amino-acid biosynthesis; glycine biosynthesis; glycine from L-serine: step 1/1. In terms of biological role, catalyzes the reversible interconversion of serine and glycine with tetrahydrofolate (THF) serving as the one-carbon carrier. This reaction serves as the major source of one-carbon groups required for the biosynthesis of purines, thymidylate, methionine, and other important biomolecules. Also exhibits THF-independent aldolase activity toward beta-hydroxyamino acids, producing glycine and aldehydes, via a retro-aldol mechanism. The polypeptide is Serine hydroxymethyltransferase (Methylococcus capsulatus (strain ATCC 33009 / NCIMB 11132 / Bath)).